Here is a 357-residue protein sequence, read N- to C-terminus: IGF-like family receptor 1 (357 aa).

The signal sequence occupies residues 1-22 (MGPLRLLPTAVLLLAQAAPWEA). At 23-160 (SQHCGRLEYW…HKAPQQAWPS (138 aa)) the chain is on the extracellular side. Positions 100-147 (IPSGSRGGTGRPCREPVPNKEPCPLTPGKSSILSSQEPSSPGIPSVSW) are disordered. Residues 129–139 (SSILSSQEPSS) are compositionally biased toward low complexity. Residues 161 to 181 (LSFALFLVLVLLVTSAIILLA) form a helical membrane-spanning segment. Residues 182–357 (LQRHHRRLDQ…KLGSSGACLA (176 aa)) are Cytoplasmic-facing.

It localises to the cell membrane. In terms of biological role, probable cell membrane receptor for the IGF-like family protein IGFL. This is IGF-like family receptor 1 (IGFLR1) from Bos taurus (Bovine).